The primary structure comprises 130 residues: MAQVEYRGTGRRKNSVARVRLVPGEGNITVNGKDVREYLPFESLILDLNQPFEVTETKGNYDVLVNVHGGGFTGQAQAIRHGIARALLEADPEYRSSLKRAGLLTRDPRMKERKKPGLKKARRSPQFSKR.

The segment at 98-130 (LKRAGLLTRDPRMKERKKPGLKKARRSPQFSKR) is disordered. A compositionally biased stretch (basic residues) spans 111–130 (KERKKPGLKKARRSPQFSKR).

It belongs to the universal ribosomal protein uS9 family.

This is Small ribosomal subunit protein uS9 (rpsI) from Staphylococcus carnosus (strain TM300).